A 966-amino-acid chain; its full sequence is Aminopeptidase N (966 aa).

Residues 1 to 8 lie on the Cytoplasmic side of the membrane; sequence MAKGFYIS. The chain crosses the membrane as a helical; Signal-anchor for type II membrane protein span at residues 9–32; it reads KTLGILGILLGVAAVCTIIALSVV. The interval 33 to 68 is cytosolic Ser/Thr-rich junction; the sequence is YAQEKNRNAENSATAPTLPGSTSATTATTTPAVDES. At 33–966 the chain is on the extracellular side; the sequence is YAQEKNRNAE…VFKWFTENSS (934 aa). The segment at 42–64 is disordered; the sequence is ENSATAPTLPGSTSATTATTTPA. A compositionally biased stretch (low complexity) spans 44-64; the sequence is SATAPTLPGSTSATTATTTPA. The interval 69 to 966 is metalloprotease; the sequence is KPWNQYRLPK…VFKWFTENSS (898 aa). Residues Asn106, Asn114, and Asn128 are each glycosylated (N-linked (GlcNAc...) asparagine). Tyr176 is modified (sulfotyrosine). N-linked (GlcNAc...) asparagine glycosylation is found at Asn234, Asn288, Asn318, and Asn332. Residue 351 to 355 participates in substrate binding; the sequence is GAMEN. Residue His387 participates in Zn(2+) binding. Glu388 functions as the Proton acceptor in the catalytic mechanism. Positions 391 and 410 each coordinate Zn(2+). A sulfotyrosine mark is found at Tyr418 and Tyr423. 4 N-linked (GlcNAc...) asparagine glycosylation sites follow: Asn573, Asn606, Asn624, and Asn734. Cysteines 760 and 767 form a disulfide. Asn784 and Asn817 each carry an N-linked (GlcNAc...) asparagine glycan. Cys797 and Cys833 are oxidised to a cystine. Phosphotyrosine is present on Tyr852.

It belongs to the peptidase M1 family. In terms of assembly, homodimer. Interacts with SLC6A19. Zn(2+) serves as cofactor. In terms of processing, N- and O-glycosylated. Post-translationally, sulfated. May undergo proteolysis and give rise to a soluble form. Expressed in the intestinal brush border (at protein level). Highly expressed in intestinal tract and kidney, present in liver, lymph node, spleen, and brain. Found as well in monocytes, macrophages, dendritic cells, veiled cells and B-cells but not on T-cells and thymocytes.

Its subcellular location is the cell membrane. It catalyses the reaction Release of an N-terminal amino acid, Xaa-|-Yaa- from a peptide, amide or arylamide. Xaa is preferably Ala, but may be most amino acids including Pro (slow action). When a terminal hydrophobic residue is followed by a prolyl residue, the two may be released as an intact Xaa-Pro dipeptide.. Its function is as follows. Broad specificity aminopeptidase which plays a role in the final digestion of peptides generated from hydrolysis of proteins by gastric and pancreatic proteases. Also involved in the processing of various peptides including peptide hormones, such as angiotensin III and IV, neuropeptides, and chemokines. May also be involved the cleavage of peptides bound to major histocompatibility complex class II molecules of antigen presenting cells. May have a role in angiogenesis and promote cholesterol crystallization. May have a role in amino acid transport by acting as binding partner of amino acid transporter SLC6A19 and regulating its activity. The polypeptide is Aminopeptidase N (Anpep) (Mus musculus (Mouse)).